A 407-amino-acid polypeptide reads, in one-letter code: Arginine deiminase (407 aa).

Catalysis depends on C397, which acts as the Amidino-cysteine intermediate.

It belongs to the arginine deiminase family.

The protein localises to the cytoplasm. It carries out the reaction L-arginine + H2O = L-citrulline + NH4(+). It participates in amino-acid degradation; L-arginine degradation via ADI pathway; carbamoyl phosphate from L-arginine: step 1/2. The protein is Arginine deiminase of Limosilactobacillus fermentum (strain NBRC 3956 / LMG 18251) (Lactobacillus fermentum).